The sequence spans 335 residues: Cell division protein ZipA (335 aa).

Topologically, residues 1-4 (MDLN) are periplasmic. Residues 5–25 (AILIILGVIALIILVAHGIWS) form a helical membrane-spanning segment. The Cytoplasmic segment spans residues 26–335 (NRREKSQYFE…AERDYLARVS (310 aa)).

The protein belongs to the ZipA family. In terms of assembly, interacts with FtsZ via their C-terminal domains.

The protein localises to the cell inner membrane. Functionally, essential cell division protein that stabilizes the FtsZ protofilaments by cross-linking them and that serves as a cytoplasmic membrane anchor for the Z ring. Also required for the recruitment to the septal ring of downstream cell division proteins. The polypeptide is Cell division protein ZipA (Histophilus somni (strain 2336) (Haemophilus somnus)).